We begin with the raw amino-acid sequence, 160 residues long: Phosphopantetheine adenylyltransferase (160 aa).

Serine 9 lines the substrate pocket. ATP contacts are provided by residues 9 to 10 (SF) and histidine 17. Substrate is bound by residues lysine 41, leucine 73, and lysine 87. ATP-binding positions include 88–90 (GLR), glutamate 98, and 123–129 (YGYLSSS).

It belongs to the bacterial CoaD family. Homohexamer. Mg(2+) serves as cofactor.

Its subcellular location is the cytoplasm. It carries out the reaction (R)-4'-phosphopantetheine + ATP + H(+) = 3'-dephospho-CoA + diphosphate. The protein operates within cofactor biosynthesis; coenzyme A biosynthesis; CoA from (R)-pantothenate: step 4/5. Reversibly transfers an adenylyl group from ATP to 4'-phosphopantetheine, yielding dephospho-CoA (dPCoA) and pyrophosphate. In Caldanaerobacter subterraneus subsp. tengcongensis (strain DSM 15242 / JCM 11007 / NBRC 100824 / MB4) (Thermoanaerobacter tengcongensis), this protein is Phosphopantetheine adenylyltransferase.